We begin with the raw amino-acid sequence, 98 residues long: Ribonuclease kappa (98 aa).

The next 2 helical transmembrane spans lie at 13–33 and 65–85; these read ACGIVLSAWGVIMLIMLGIFF and VSYNCFIAAGLYLLLGGFSFC.

The protein belongs to the RNase K family. Interacts with the proton translocation complex V0 of the V-ATPase. Interacts with ATP6AP1.

The protein localises to the endomembrane system. Its subcellular location is the cytoplasmic vesicle. It localises to the clathrin-coated vesicle membrane. In terms of biological role, endoribonuclease which preferentially cleaves ApU and ApG phosphodiester bonds. Hydrolyzes UpU bonds at a lower rate. Regulates the activity of vacuolar (H+)-ATPase (V-ATPase) which is responsible for acidifying and maintaining the pH of intracellular compartments. Required at an early stage of receptor-mediated endocytosis. The protein is Ribonuclease kappa (Rnasek) of Mus musculus (Mouse).